Here is a 258-residue protein sequence, read N- to C-terminus: Imidazole glycerol phosphate synthase subunit HisF (258 aa).

Catalysis depends on residues Asp-11 and Asp-130.

Belongs to the HisA/HisF family. In terms of assembly, heterodimer of HisH and HisF.

The protein localises to the cytoplasm. It catalyses the reaction 5-[(5-phospho-1-deoxy-D-ribulos-1-ylimino)methylamino]-1-(5-phospho-beta-D-ribosyl)imidazole-4-carboxamide + L-glutamine = D-erythro-1-(imidazol-4-yl)glycerol 3-phosphate + 5-amino-1-(5-phospho-beta-D-ribosyl)imidazole-4-carboxamide + L-glutamate + H(+). It functions in the pathway amino-acid biosynthesis; L-histidine biosynthesis; L-histidine from 5-phospho-alpha-D-ribose 1-diphosphate: step 5/9. Its function is as follows. IGPS catalyzes the conversion of PRFAR and glutamine to IGP, AICAR and glutamate. The HisF subunit catalyzes the cyclization activity that produces IGP and AICAR from PRFAR using the ammonia provided by the HisH subunit. In Escherichia coli O127:H6 (strain E2348/69 / EPEC), this protein is Imidazole glycerol phosphate synthase subunit HisF.